The chain runs to 316 residues: Nautilin-63 (316 aa).

Disordered stretches follow at residues 1-26 (IPDLASSRSTLPVLTKGPTGLLGPRG), 149-173 (PFPTSRSTYGPSGSQPGKKGVVTPF), 189-238 (DSRC…GIAS), and 259-278 (PPTSPFFTGPSGYTSDGLNK). A compositionally biased stretch (low complexity) spans 10 to 26 (TLPVLTKGPTGLLGPRG). 3 stretches are compositionally biased toward polar residues: residues 152-163 (TSRSTYGPSGSQ), 207-216 (GHSSPATLNS), and 269-278 (SGYTSDGLNK).

Post-translationally, glycosylated; contains mainly glucose, galactose, galactosamine, glucosamine and glucuronic acid. As to expression, component of the acid-soluble organic matrix of nacreous shell layers (at protein level).

Its subcellular location is the secreted. Involved in nacre formation. Affects morphology of calcite crystals in vitro but does not inhibit their formation. Binds chitin. In Nautilus macromphalus (Bellybutton nautilus), this protein is Nautilin-63.